The sequence spans 582 residues: Potassium voltage-gated channel subfamily KQT member 1 (582 aa).

Residues 1 to 31 (RVSIYSARRPLLARTHIQGRVYNFLERPTGW) are Cytoplasmic-facing. The chain crosses the membrane as a helical span at residues 32 to 53 (KCFVYHFAVFLIVLVCLIFSVL). Over 54–64 (STIEQYVALAT) the chain is Extracellular. The chain crosses the membrane as a helical span at residues 65–87 (GTLFWMEIVLVVFFGTEYVVRLW). Over 88-103 (SAGCRSKYVGVWGRLR) the chain is Cytoplasmic. A helical membrane pass occupies residues 104–129 (FARKPISIIDLIVVLASMVVLCVGSK). Over 130-137 (GQVFATSA) the chain is Extracellular. The helical; Voltage-sensor transmembrane segment at 138–153 (IRGIRFLQILRMLHVD) threads the bilayer. Positions 149-157 (MLHVDRQGG) are interaction with KCNE3. The Cytoplasmic segment spans residues 154–171 (RQGGTWRLLGSVVFIHRQ). Q155 lines the a 1,2-diacyl-sn-glycero-3-phospho-(1D-myo-inositol-4,5-bisphosphate) pocket. The chain crosses the membrane as a helical span at residues 172-194 (ELITTLYIGFLGLIFSSYFVYLA). The Extracellular portion of the chain corresponds to 195–210 (EKDAVNESGQVEFGSY). N-linked (GlcNAc...) asparagine glycosylation is present at N200. The segment at residues 211–231 (ADALWWGVVTVTTIGYGDKVP) is an intramembrane region (pore-forming). Residues 232–233 (QT) are Extracellular-facing. Residues 234–259 (WVGKTIASCFSVFAISFFALPAGILG) form a helical membrane-spanning segment. Over 260–582 (SGFALKVQQK…VPRRGPEEGS (323 aa)) the chain is Cytoplasmic. The interval 281–293 (AAASLIQTAWRCY) is interaction with CALM. Residues S318 and S320 each carry the phosphoserine modification. Residues 426-440 (KVIRRMQYFVAKKKF) are interaction with CALM; calcium-dependent. Residues 446–483 (PYDVRDVIEQYSQGHLNLMVRIKELQRRLDQSIGKPSL) form an interaction with KCNE1 C-terminus region. The stretch at 496-532 (SNTIGARLNRVEDKVAQLDQRLVLITDMLQQLLSLHH) forms a coiled coil. The interval 499–527 (IGARLNRVEDKVAQLDQRLVLITDMLQQL) is interaction with AKAP9. The C-terminal assembly domain (tetramerization) stretch occupies residues 500 to 531 (GARLNRVEDKVAQLDQRLVLITDMLQQLLSLH). A disordered region spans residues 530–582 (LHHGGPPGSRPPSGGGAQVQPCGPTNPELFLPGNALPTYEQLTVPRRGPEEGS).

This sequence belongs to the potassium channel family. KQT (TC 1.A.1.15) subfamily. Kv7.1/KCNQ1 sub-subfamily. Tetramer. Heterotetramer with KCNE1; targets to the membrane raft. Interacts (via C-terminus) with CALM; forms a heterooctameric structure (with 4:4 KCNQ1:CALM stoichiometry) in a calcium-independent manner. Interacts with AKAP9; targets protein kinase A (PKA) catalytic and regulatory subunits and protein phosphatase 1 (PP1) to the KCNQ1-KCNE1 complex, allowing PKA-mediated phosphorylation and increase of delayed rectifier potassium channel activity. Interacts with KCNE2; form a heterooligomer complex that targets to the membrane raft and leading to currents with an apparently instantaneous activation, a rapid deactivation process and a linear current-voltage relationship and decreases the amplitude of the outward current. Interacts with AP2M1; mediates estrogen-induced internalization via clathrin-coated vesicles. Interacts with NEDD4L; promotes internalization and decreases I(Ks) currents. Interacts with USP2; counteracts the NEDD4L-specific down-regulation of I(Ks) and restore plasma membrane localization. Heterotetramer with KCNQ5; has a voltage-gated potassium channel activity. Interacts with KCNE3; four KCNE3 molecules are bound to one KCNQ1 tetramer (4:4 KCNQ1:KCNE3 stoichiometry); alters membrane raft localization; affects KCNQ1 structure and gating properties. Interacts with KCNE4; impairs KCNQ1 localization in lipid rafts and inhibits voltage-gated potassium channel activity. Interacts with KCNE5; impairs KCNQ1 localization in lipid rafts and only conducts current upon strong and continued depolarization. In terms of processing, phosphorylated by PKA; increases delayed rectifier potassium channel activity of the KCNQ1-KCNE1 complex through a macromolecular complex that includes PKA, PP1, and the targeting protein AKAP9. Ubiquitinated by NEDD4L; promotes internalization. The ubiquitinylated form is internalized through a clathrin-mediated endocytosis by interacting with AP2M1 and is recycled back to the cell membrane via RAB4A and RAB11A. Post-translationally, deubiquitinated by USP2; counteracts the NEDD4L-specific down-regulation of I(Ks) and restores the membrane localization.

It is found in the cell membrane. The protein localises to the cytoplasmic vesicle membrane. It localises to the early endosome. Its subcellular location is the membrane raft. The protein resides in the endoplasmic reticulum. It is found in the basolateral cell membrane. It carries out the reaction K(+)(in) = K(+)(out). PIP2 molecule is essential to activate KCNQ channels by inducing the coupling of the voltage-sensing domain (VSD) and the pore-forming domain (PD). Upon channel activation, PIP2 disrupts the VSD-calmodulin/CALM interactions, causing the release of CALM from the VSD which triggers the opening of the gate. Calcium potentiates KCNQ1 channel current through calcium-bound CALM. Calcium-bound CALM competes with PIP2 to stabilize the channel open state. Pore-forming subunit of the voltage-gated potassium (Kv) channel involved in the regulation of cardiomyocyte excitability and important in normal development and functions of myocardium, inner ear, stomach and colon. Associates with KCNE beta subunits that modulates current kinetics. Induces a voltage-dependent by rapidly activating and slowly deactivating potassium-selective outward current. Also promotes a delayed voltage activated potassium current showing outward rectification characteristic. During beta-adrenergic receptor stimulation participates in cardiac repolarization by associating with KCNE1 to form the I(Ks) cardiac potassium current that increases the amplitude and slows down the activation kinetics of outward potassium current I(Ks). Muscarinic agonist oxotremorine-M strongly suppresses KCNQ1/KCNE1 current. When associated with KCNE3, forms the potassium channel that is important for cyclic AMP-stimulated intestinal secretion of chloride ions. This interaction with KCNE3 is reduced by 17beta-estradiol, resulting in the reduction of currents. During conditions of increased substrate load, maintains the driving force for proximal tubular and intestinal sodium ions absorption, gastric acid secretion, and cAMP-induced jejunal chloride ions secretion. Allows the provision of potassium ions to the luminal membrane of the secretory canaliculus in the resting state as well as during stimulated acid secretion. When associated with KCNE2, forms a heterooligomer complex leading to currents with an apparently instantaneous activation, a rapid deactivation process and a linear current-voltage relationship and decreases the amplitude of the outward current. When associated with KCNE4, inhibits voltage-gated potassium channel activity. When associated with KCNE5, this complex only conducts current upon strong and continued depolarization. Also forms a heterotetramer with KCNQ5 that has a voltage-gated potassium channel activity. Binds with phosphatidylinositol 4,5-bisphosphate. The protein is Potassium voltage-gated channel subfamily KQT member 1 of Felis catus (Cat).